The sequence spans 262 residues: Type III pantothenate kinase (262 aa).

Position 9-16 (9-16) interacts with ATP; that stretch reads DIGNTNIV. Substrate is bound by residues Tyr-103 and 110–113; that span reads GVDR. Asp-112 (proton acceptor) is an active-site residue. Asp-132 contacts K(+). Thr-135 provides a ligand contact to ATP. A substrate-binding site is contributed by Thr-187.

This sequence belongs to the type III pantothenate kinase family. As to quaternary structure, homodimer. The cofactor is NH4(+). It depends on K(+) as a cofactor.

The protein resides in the cytoplasm. The enzyme catalyses (R)-pantothenate + ATP = (R)-4'-phosphopantothenate + ADP + H(+). The protein operates within cofactor biosynthesis; coenzyme A biosynthesis; CoA from (R)-pantothenate: step 1/5. Its function is as follows. Catalyzes the phosphorylation of pantothenate (Pan), the first step in CoA biosynthesis. This is Type III pantothenate kinase from Finegoldia magna (strain ATCC 29328 / DSM 20472 / WAL 2508) (Peptostreptococcus magnus).